The chain runs to 61 residues: Small ribosomal subunit protein uS14 (61 aa).

Cysteine 24, cysteine 27, cysteine 40, and cysteine 43 together coordinate Zn(2+).

Belongs to the universal ribosomal protein uS14 family. Zinc-binding uS14 subfamily. In terms of assembly, part of the 30S ribosomal subunit. Contacts proteins S3 and S10. It depends on Zn(2+) as a cofactor.

Functionally, binds 16S rRNA, required for the assembly of 30S particles and may also be responsible for determining the conformation of the 16S rRNA at the A site. This chain is Small ribosomal subunit protein uS14, found in Deinococcus deserti (strain DSM 17065 / CIP 109153 / LMG 22923 / VCD115).